Here is a 292-residue protein sequence, read N- to C-terminus: 2-hydroxy-3-oxopropionate reductase (292 aa).

NAD(+) contacts are provided by residues 4 to 18 (GFIG…MAIN) and serine 94. Lysine 169 is a catalytic residue. Lysine 237 lines the NAD(+) pocket.

Belongs to the HIBADH-related family.

It carries out the reaction (R)-glycerate + NADP(+) = 2-hydroxy-3-oxopropanoate + NADPH + H(+). The catalysed reaction is (R)-glycerate + NAD(+) = 2-hydroxy-3-oxopropanoate + NADH + H(+). Its pathway is organic acid metabolism; glycolate degradation; 3-phospho-D-glycerate from glycolate: step 3/4. The sequence is that of 2-hydroxy-3-oxopropionate reductase (glxR) from Escherichia coli (strain K12).